A 294-amino-acid polypeptide reads, in one-letter code: 4-hydroxybenzoate octaprenyltransferase (294 aa).

A run of 7 helical transmembrane segments spans residues 37–57 (LWAM…WIFF), 101–121 (LAVA…LNAL), 142–162 (FFAI…PMAF), 169–189 (VPFV…AYDT), 219–239 (IMIC…LLGL), 241–261 (WPYY…YTLI), and 271–293 (AAFR…AYLL).

The protein belongs to the UbiA prenyltransferase family. It depends on Mg(2+) as a cofactor.

The protein localises to the cell inner membrane. It catalyses the reaction all-trans-octaprenyl diphosphate + 4-hydroxybenzoate = 4-hydroxy-3-(all-trans-octaprenyl)benzoate + diphosphate. The protein operates within cofactor biosynthesis; ubiquinone biosynthesis. Its function is as follows. Catalyzes the prenylation of para-hydroxybenzoate (PHB) with an all-trans polyprenyl group. Mediates the second step in the final reaction sequence of ubiquinone-8 (UQ-8) biosynthesis, which is the condensation of the polyisoprenoid side chain with PHB, generating the first membrane-bound Q intermediate 3-octaprenyl-4-hydroxybenzoate. This Cupriavidus metallidurans (strain ATCC 43123 / DSM 2839 / NBRC 102507 / CH34) (Ralstonia metallidurans) protein is 4-hydroxybenzoate octaprenyltransferase.